Here is an 89-residue protein sequence, read N- to C-terminus: Small ribosomal subunit protein uS15 (89 aa).

This sequence belongs to the universal ribosomal protein uS15 family. As to quaternary structure, part of the 30S ribosomal subunit. Forms a bridge to the 50S subunit in the 70S ribosome, contacting the 23S rRNA.

Its function is as follows. One of the primary rRNA binding proteins, it binds directly to 16S rRNA where it helps nucleate assembly of the platform of the 30S subunit by binding and bridging several RNA helices of the 16S rRNA. In terms of biological role, forms an intersubunit bridge (bridge B4) with the 23S rRNA of the 50S subunit in the ribosome. The chain is Small ribosomal subunit protein uS15 from Heliobacterium modesticaldum (strain ATCC 51547 / Ice1).